A 277-amino-acid chain; its full sequence is Large ribosomal subunit protein uL2 (277 aa).

2 disordered regions span residues 38-58 (HRKGGRNNQGRLTVRHQGGGH) and 219-277 (TVRG…RKNK).

This sequence belongs to the universal ribosomal protein uL2 family. Part of the 50S ribosomal subunit. Forms a bridge to the 30S subunit in the 70S ribosome.

One of the primary rRNA binding proteins. Required for association of the 30S and 50S subunits to form the 70S ribosome, for tRNA binding and peptide bond formation. It has been suggested to have peptidyltransferase activity; this is somewhat controversial. Makes several contacts with the 16S rRNA in the 70S ribosome. In Bacillus pumilus (strain SAFR-032), this protein is Large ribosomal subunit protein uL2.